A 705-amino-acid polypeptide reads, in one-letter code: Solute carrier family 12 member 8 (705 aa).

11 helical membrane passes run phenylalanine 38–phenylalanine 58, glycine 69–leucine 89, isoleucine 92–valine 112, valine 121–alanine 141, isoleucine 159–isoleucine 179, leucine 181–phenylalanine 201, phenylalanine 232–methionine 252, leucine 268–valine 288, leucine 306–glycine 326, leucine 368–isoleucine 388, and phenylalanine 390–glycine 410. Residues glutamate 472–serine 512 form a disordered region. Basic residues predominate over residues asparagine 486–alanine 495. 2 helical membrane-spanning segments follow: residues tryptophan 587 to tyrosine 607 and methionine 612 to glycine 632.

The protein belongs to the SLC12A transporter family.

Its subcellular location is the membrane. Its function is as follows. Cation/chloride cotransporter that may play a role in the control of keratinocyte proliferation. The sequence is that of Solute carrier family 12 member 8 (Slc12a8) from Mus musculus (Mouse).